A 1394-amino-acid polypeptide reads, in one-letter code: Tubulin glycylase 3E (1394 aa).

4 disordered regions span residues lysine 201–glutamate 230, asparagine 563–isoleucine 582, aspartate 620–phenylalanine 663, and serine 682–glutamate 706. Low complexity predominate over residues asparagine 205 to asparagine 216. Over residues histidine 217–glutamate 230 the composition is skewed to basic and acidic residues. Residues glutamine 568–isoleucine 582 show a composition bias toward low complexity. Positions lysine 627 to glutamate 655 are enriched in polar residues. Over residues serine 682 to asparagine 703 the composition is skewed to low complexity. One can recognise a TTL domain in the interval arginine 911–isoleucine 1250. Residues glutamine 1058–isoleucine 1061, lysine 1079, and aspartate 1081 contribute to the ATP site. IQ domains follow at residues glutamine 1320 to threonine 1349 and phenylalanine 1348 to threonine 1377.

Its subcellular location is the cell projection. The protein resides in the cilium. It localises to the cytoplasm. It is found in the cytoskeleton. The protein localises to the cilium axoneme. Its function is as follows. Probable glycylase which modifies tubulin, generating side chains of glycine on the gamma-carboxyl groups of specific glutamate residues within the C-terminal tail of tubulin. The polypeptide is Tubulin glycylase 3E (TTLL3E) (Tetrahymena thermophila (strain SB210)).